A 341-amino-acid chain; its full sequence is Ketol-acid reductoisomerase (NADP(+)) (341 aa).

A KARI N-terminal Rossmann domain is found at 1 to 182; that stretch reads MATIYYDKDA…GCTRAGVLET (182 aa). NADP(+) is bound by residues 25 to 28, Ser-51, Ser-53, and 83 to 86; these read YGSQ and DQTQ. The active site involves His-108. Gly-134 contacts NADP(+). One can recognise a KARI C-terminal knotted domain in the interval 183 to 328; it reads TFKEETETDL…KRLRDMMSWI (146 aa). 4 residues coordinate Mg(2+): Asp-191, Glu-195, Glu-227, and Glu-231. Residue Ser-252 participates in substrate binding.

It belongs to the ketol-acid reductoisomerase family. Mg(2+) is required as a cofactor.

It carries out the reaction (2R)-2,3-dihydroxy-3-methylbutanoate + NADP(+) = (2S)-2-acetolactate + NADPH + H(+). The catalysed reaction is (2R,3R)-2,3-dihydroxy-3-methylpentanoate + NADP(+) = (S)-2-ethyl-2-hydroxy-3-oxobutanoate + NADPH + H(+). The protein operates within amino-acid biosynthesis; L-isoleucine biosynthesis; L-isoleucine from 2-oxobutanoate: step 2/4. Its pathway is amino-acid biosynthesis; L-valine biosynthesis; L-valine from pyruvate: step 2/4. Functionally, involved in the biosynthesis of branched-chain amino acids (BCAA). Catalyzes an alkyl-migration followed by a ketol-acid reduction of (S)-2-acetolactate (S2AL) to yield (R)-2,3-dihydroxy-isovalerate. In the isomerase reaction, S2AL is rearranged via a Mg-dependent methyl migration to produce 3-hydroxy-3-methyl-2-ketobutyrate (HMKB). In the reductase reaction, this 2-ketoacid undergoes a metal-dependent reduction by NADPH to yield (R)-2,3-dihydroxy-isovalerate. The polypeptide is Ketol-acid reductoisomerase (NADP(+)) (Anaeromyxobacter sp. (strain K)).